An 800-amino-acid chain; its full sequence is Ent-copalyl diphosphate synthase 2 (800 aa).

Residues 52-80 (QGQETRERRQLDDDEHARPPQGGDDDVAA) form a disordered region. A compositionally biased stretch (basic and acidic residues) spans 55–69 (ETRERRQLDDDEHAR). Lys242 contributes to the substrate binding site. Residues Asp374 and Asp376 each coordinate Mg(2+). Residues 374 to 377 (DIDD) carry the DXDD motif motif. Lys461 contributes to the substrate binding site.

Belongs to the terpene synthase family. It depends on Mg(2+) as a cofactor.

The enzyme catalyses (2E,6E,10E)-geranylgeranyl diphosphate = ent-copalyl diphosphate. Functionally, catalyzes the conversion of geranylgeranyl diphosphate to the phytoalexin precursor ent-copalyl diphosphate. In Oryza sativa subsp. indica (Rice), this protein is Ent-copalyl diphosphate synthase 2 (CPS2).